The following is a 429-amino-acid chain: Adenylosuccinate synthetase (429 aa).

GTP-binding positions include 12-18 and 40-42; these read GDEGKGK and GHT. D13 serves as the catalytic Proton acceptor. D13 and G40 together coordinate Mg(2+). IMP contacts are provided by residues 13–16, 38–41, T128, R142, Q223, T238, and R302; these read DEGK and NAGH. H41 functions as the Proton donor in the catalytic mechanism. Position 298–304 (298–304) interacts with substrate; it reads TTTGRPR. GTP contacts are provided by residues R304, 330–332, and 412–414; these read SID and SVG.

This sequence belongs to the adenylosuccinate synthetase family. As to quaternary structure, homodimer. It depends on Mg(2+) as a cofactor.

It localises to the cytoplasm. The enzyme catalyses IMP + L-aspartate + GTP = N(6)-(1,2-dicarboxyethyl)-AMP + GDP + phosphate + 2 H(+). It functions in the pathway purine metabolism; AMP biosynthesis via de novo pathway; AMP from IMP: step 1/2. Its function is as follows. Plays an important role in the de novo pathway of purine nucleotide biosynthesis. Catalyzes the first committed step in the biosynthesis of AMP from IMP. This Bacillus cytotoxicus (strain DSM 22905 / CIP 110041 / 391-98 / NVH 391-98) protein is Adenylosuccinate synthetase.